Consider the following 205-residue polypeptide: Ferritin heavy chain (205 aa).

Residues 1–19 (MVKLIASLLLLAVVAQAYG) form the signal peptide. The region spanning 35–190 (VDMKDACIKG…GKLTTLKKMM (156 aa)) is the Ferritin-like diiron domain. Cysteine 41 and cysteine 150 are joined by a disulfide. Glutamate 52, glutamate 87, histidine 90, glutamate 136, and glutamine 172 together coordinate Fe cation.

It belongs to the ferritin family. As to quaternary structure, oligomer of 12 light (L) chains and 12 heavy (H) chains; L and H chains are disulfide-linked. The functional molecule forms a roughly spherical shell with a diameter of 12 nm and contains a central cavity into which the insoluble ferric iron core is deposited. Expressed in hemolymph and gut (at protein level). Expressed in the head (at protein level). Expressed in thorax and abdomen.

Its subcellular location is the golgi apparatus. It is found in the secreted. It catalyses the reaction 4 Fe(2+) + O2 + 4 H(+) = 4 Fe(3+) + 2 H2O. Stores iron in a soluble, non-toxic, readily available form. Important for iron homeostasis. Iron is taken up in the ferrous form and deposited as ferric hydroxides after oxidation. Ferritin is composed of a heavy (H) chain which is responsible for the oxidation and uptake of ferrous iron, and a light (L) chain which facilitates the nucleation of the ferrihydrite iron core. Required for dietary iron absorption in the midgut. Involved in tissue iron detoxification by exporting excess iron. Functions as an antioxidant and protects the developing organs from cell-mediated ferroptosis. Required for embryo and larval development. Plays a role in blood cell (haemocyte) differentiation in the lymph gland at the larval stage. May also store Zn(2+) and Mn(2+) and thus may play a role in zinc and manganese homeostasis. In Drosophila melanogaster (Fruit fly), this protein is Ferritin heavy chain.